Reading from the N-terminus, the 557-residue chain is Arginine--tRNA ligase (557 aa).

A 'HIGH' region motif is present at residues 132-142 (ANPTGLLHMGN).

Belongs to the class-I aminoacyl-tRNA synthetase family. Monomer.

The protein localises to the cytoplasm. The enzyme catalyses tRNA(Arg) + L-arginine + ATP = L-arginyl-tRNA(Arg) + AMP + diphosphate. The chain is Arginine--tRNA ligase from Carboxydothermus hydrogenoformans (strain ATCC BAA-161 / DSM 6008 / Z-2901).